Consider the following 89-residue polypeptide: Small ribosomal subunit protein bS20 (89 aa).

The interval 1–28 (MTLANIKSAKKRAVQSEKRRQHNASQRS) is disordered.

This sequence belongs to the bacterial ribosomal protein bS20 family.

In terms of biological role, binds directly to 16S ribosomal RNA. The sequence is that of Small ribosomal subunit protein bS20 from Haemophilus ducreyi (strain 35000HP / ATCC 700724).